The chain runs to 748 residues: NAD(P)H-quinone oxidoreductase subunit 5, chloroplastic (748 aa).

16 helical membrane passes run 9 to 29 (WIIP…LLLF), 40 to 60 (WSFP…YLSI), 89 to 109 (IDPL…MVLI), 125 to 145 (FAYM…SNLI), 147 to 167 (IYIF…FWFT), 185 to 205 (GDFG…SFEF), 219 to 239 (NEVN…GAVA), 258 to 278 (TPIS…FLVA), 280 to 300 (LLPL…IGII), 327 to 347 (LGYM…FHLI), 354 to 374 (ALLF…VGYS), 396 to 416 (NAFL…CFWS), 425 to 445 (WLYS…TAFY), 550 to 570 (LFPM…GSPF), 611 to 631 (ATFS…FYKP), and 728 to 748 (YILL…FVFF).

The protein belongs to the complex I subunit 5 family. As to quaternary structure, NDH is composed of at least 16 different subunits, 5 of which are encoded in the nucleus.

It localises to the plastid. The protein resides in the chloroplast thylakoid membrane. It carries out the reaction a plastoquinone + NADH + (n+1) H(+)(in) = a plastoquinol + NAD(+) + n H(+)(out). It catalyses the reaction a plastoquinone + NADPH + (n+1) H(+)(in) = a plastoquinol + NADP(+) + n H(+)(out). Functionally, NDH shuttles electrons from NAD(P)H:plastoquinone, via FMN and iron-sulfur (Fe-S) centers, to quinones in the photosynthetic chain and possibly in a chloroplast respiratory chain. The immediate electron acceptor for the enzyme in this species is believed to be plastoquinone. Couples the redox reaction to proton translocation, and thus conserves the redox energy in a proton gradient. In Cucumis sativus (Cucumber), this protein is NAD(P)H-quinone oxidoreductase subunit 5, chloroplastic (ndhF).